The primary structure comprises 140 residues: Nucleoside triphosphatase NudI (140 aa).

A Nudix hydrolase domain is found at 1–140 (MRHRTIVCPL…RVTLSLKGLL (140 aa)). The Nudix box signature appears at 38 to 58 (GVEPGERIEEALRREIREELG).

This sequence belongs to the Nudix hydrolase family. NudI subfamily. As to quaternary structure, monomer. The cofactor is Mg(2+).

It carries out the reaction a ribonucleoside 5'-triphosphate + H2O = a ribonucleoside 5'-phosphate + diphosphate + H(+). It catalyses the reaction a 2'-deoxyribonucleoside 5'-triphosphate + H2O = a 2'-deoxyribonucleoside 5'-phosphate + diphosphate + H(+). The catalysed reaction is dUTP + H2O = dUMP + diphosphate + H(+). The enzyme catalyses dTTP + H2O = dTMP + diphosphate + H(+). It carries out the reaction dCTP + H2O = dCMP + diphosphate + H(+). Its function is as follows. Catalyzes the hydrolysis of nucleoside triphosphates, with a preference for pyrimidine deoxynucleoside triphosphates (dUTP, dTTP and dCTP). This chain is Nucleoside triphosphatase NudI, found in Klebsiella pneumoniae subsp. pneumoniae (strain ATCC 700721 / MGH 78578).